A 350-amino-acid polypeptide reads, in one-letter code: Alcohol dehydrogenase 1 (350 aa).

Residues C46, H69, C100, C103, C106, C114, and C156 each contribute to the Zn(2+) site. Residues 180–186 (GAAGGLG), D204, K209, 271–273 (VGL), and R343 each bind NAD(+).

It belongs to the zinc-containing alcohol dehydrogenase family. In terms of assembly, homotetramer. Zn(2+) is required as a cofactor.

It is found in the cytoplasm. The enzyme catalyses a primary alcohol + NAD(+) = an aldehyde + NADH + H(+). It catalyses the reaction a secondary alcohol + NAD(+) = a ketone + NADH + H(+). This Kluyveromyces lactis (strain ATCC 8585 / CBS 2359 / DSM 70799 / NBRC 1267 / NRRL Y-1140 / WM37) (Yeast) protein is Alcohol dehydrogenase 1 (ADH1).